The chain runs to 156 residues: 6,7-dimethyl-8-ribityllumazine synthase (156 aa).

5-amino-6-(D-ribitylamino)uracil-binding positions include Phe-25, 59–61 (AFE), and 83–85 (AVI). 88-89 (GT) is a binding site for (2S)-2-hydroxy-3-oxobutyl phosphate. His-91 (proton donor) is an active-site residue. Phe-116 is a binding site for 5-amino-6-(D-ribitylamino)uracil. Arg-130 is a binding site for (2S)-2-hydroxy-3-oxobutyl phosphate.

Belongs to the DMRL synthase family.

The enzyme catalyses (2S)-2-hydroxy-3-oxobutyl phosphate + 5-amino-6-(D-ribitylamino)uracil = 6,7-dimethyl-8-(1-D-ribityl)lumazine + phosphate + 2 H2O + H(+). Its pathway is cofactor biosynthesis; riboflavin biosynthesis; riboflavin from 2-hydroxy-3-oxobutyl phosphate and 5-amino-6-(D-ribitylamino)uracil: step 1/2. Functionally, catalyzes the formation of 6,7-dimethyl-8-ribityllumazine by condensation of 5-amino-6-(D-ribitylamino)uracil with 3,4-dihydroxy-2-butanone 4-phosphate. This is the penultimate step in the biosynthesis of riboflavin. This Desulfovibrio desulfuricans (strain ATCC 27774 / DSM 6949 / MB) protein is 6,7-dimethyl-8-ribityllumazine synthase.